The sequence spans 399 residues: Putative 8-amino-7-oxononanoate synthase (399 aa).

Arg-23 provides a ligand contact to substrate. Pyridoxal 5'-phosphate is bound at residue 110-111; it reads GY. His-135 is a substrate binding site. Pyridoxal 5'-phosphate is bound by residues Ser-183, 208 to 211, and 239 to 242; these read DEAH and TLSK. Lys-242 is subject to N6-(pyridoxal phosphate)lysine. Thr-364 provides a ligand contact to substrate.

This sequence belongs to the class-II pyridoxal-phosphate-dependent aminotransferase family. BioF subfamily. Homodimer. It depends on pyridoxal 5'-phosphate as a cofactor.

It catalyses the reaction 6-carboxyhexanoyl-[ACP] + L-alanine + H(+) = (8S)-8-amino-7-oxononanoate + holo-[ACP] + CO2. It participates in cofactor biosynthesis; biotin biosynthesis. In terms of biological role, catalyzes the decarboxylative condensation of pimeloyl-[acyl-carrier protein] and L-alanine to produce 8-amino-7-oxononanoate (AON), [acyl-carrier protein], and carbon dioxide. The protein is Putative 8-amino-7-oxononanoate synthase (bioF) of Cyanothece sp. (strain PCC 7425 / ATCC 29141).